The chain runs to 552 residues: Arginine--tRNA ligase (552 aa).

A 'HIGH' region motif is present at residues 123-133 (ANPTGPLTIGR).

It belongs to the class-I aminoacyl-tRNA synthetase family. In terms of assembly, monomer.

It is found in the cytoplasm. It carries out the reaction tRNA(Arg) + L-arginine + ATP = L-arginyl-tRNA(Arg) + AMP + diphosphate. This chain is Arginine--tRNA ligase, found in Chlorobium luteolum (strain DSM 273 / BCRC 81028 / 2530) (Pelodictyon luteolum).